Here is an 804-residue protein sequence, read N- to C-terminus: MRGTSIREGAPKTLLARALYDNHADCSDELAFSRGDILTIVEQNVPESEGWWRCLLHGRQGLAPANRLQVLRETPADRPCPLLPRGPDTDLTSSGAPYQVQDLISPPPQGPVYEPMRSWVEGPSPATAQVYELPESPSSARIICEKTLSFPKQALSVLPRPTRASLPTLPSQVYDVPVQRQGFSTLERLEKQQFYDIPTSSQKALLHSSTSQGRDVTLAPTMAFRQGGGYNPLSSPQKSERIHDTPVLLEKADVRNVSMTSFTKDSGSRAIPGSSAVHTGAVALSPQLGNTVQRKNSLPEEPTYAFPTSRDPLPSDAGGSYKVPSRFLIPRVEQQNTMPNIYDTPKAMQGVSHNAPKAMQGVSLAGKELERGREAPENSPWISGQTSFLSPDSDRLSVASSDSRASVVSSCSSISMDSSSGSSSEDSVKELWMDVDFAKETAVSLQHKVASSAAGLLLFVSRTWRFKDSLETNIHRIRRAADHVEESVREFLDFAQGVGGTACNLTDSYLQARIRDQLQTISSSYQTLLDAKGSLDRCNWSLEVLVTDKVQNSLDDLERFVATARIVPEDVKRFTSIVIANGKLLFKQNCEKGEMDLKCERCIRPPQRETESYQESSPFDRQPTTEHSFELARKNRVNVCWQQSPNLQEKGKPTMEGKSNRNPDFHGMSPPPLTSPSPSGQNTERKIHLSKHSRLYFGALFKAISVFASSLSNGQPPEVFITQSKLVITVGQKLVDTLCSETQEKDERNEILCGSSHLCGLLKDLALATKSAVIQYPSPSALSLLQSEVERLEHHSRKFRDTLE.

One can recognise an SH3 domain in the interval 11–73; the sequence is PKTLLARALY…PANRLQVLRE (63 aa). Serine 200 and serine 297 each carry phosphoserine. Disordered regions lie at residues 369 to 395, 607 to 628, and 642 to 686; these read LERG…DSDR, QRET…TEHS, and QQSP…TERK. Residues 380-390 show a composition bias toward polar residues; sequence PWISGQTSFLS. The segment covering 649–664 has biased composition (basic and acidic residues); it reads EKGKPTMEGKSNRNPD.

The protein belongs to the CAS family. As to quaternary structure, interacts (via SH3 domain) with PTK2/FAK1 (via C-terminus). In terms of processing, phosphorylated on tyrosines by SRC.

It localises to the cytoplasm. The protein resides in the cytoskeleton. The protein localises to the cell junction. It is found in the focal adhesion. Docking protein that plays a role in tyrosine kinase-based signaling related to cell adhesion and cell spreading. Regulates PTK2/FAK1 activity, focal adhesion integrity, and cell spreading. This chain is Cas scaffolding protein family member 4, found in Mus musculus (Mouse).